The sequence spans 1025 residues: Multidrug resistance protein MdtC (1025 aa).

12 consecutive transmembrane segments (helical) span residues 3–23 (FFAL…AITL), 333–353 (EVEQ…FLFL), 360–380 (IIPA…MYLC), 387–407 (LSLM…IVVL), 431–451 (VGFT…PLLL), 463–483 (FAVT…TLTP), 528–548 (LVGV…ISIP), 853–873 (VILI…LYES), 875–895 (VHPL…LLAL), 897–917 (LFNA…IGIV), 953–973 (PIMM…LSGG), and 984–1004 (ITIV…TPVV).

This sequence belongs to the resistance-nodulation-cell division (RND) (TC 2.A.6) family. MdtC subfamily. In terms of assembly, part of a tripartite efflux system composed of MdtA, MdtB and MdtC. MdtC forms a heteromultimer with MdtB.

It localises to the cell inner membrane. In terms of biological role, the MdtABC tripartite complex confers resistance against novobiocin and deoxycholate. The protein is Multidrug resistance protein MdtC of Escherichia coli O127:H6 (strain E2348/69 / EPEC).